A 222-amino-acid chain; its full sequence is Interleukin-12 subunit alpha (222 aa).

Positions 1-25 are cleaved as a signal peptide; that stretch reads MCPPRGLLLVAILVLLNHLDHLSLA. Disulfide bonds link Cys-40-Cys-113, Cys-67-Cys-199, and Cys-88-Cys-126. N-linked (GlcNAc...) asparagine glycans are attached at residues Asn-42, Asn-96, and Asn-110.

The protein belongs to the IL-6 superfamily. Heterodimer with IL12B; disulfide-linked. This heterodimer is known as interleukin IL-12. Heterodimer with EBI3/IL27B; not disulfide-linked. This heterodimer is known as interleukin IL-35. Interacts with NBR1; this interaction promotes IL-12 secretion.

It localises to the secreted. Heterodimerizes with IL12B to form the IL-12 cytokine or with EBI3/IL27B to form the IL-35 cytokine. IL-12 is primarily produced by professional antigen-presenting cells (APCs) such as B-cells and dendritic cells (DCs) as well as macrophages and granulocytes and regulates T-cell and natural killer-cell responses, induces the production of interferon-gamma (IFN-gamma), favors the differentiation of T-helper 1 (Th1) cells and is an important link between innate resistance and adaptive immunity. Mechanistically, exerts its biological effects through a receptor composed of IL12R1 and IL12R2 subunits. Binding to the receptor results in the rapid tyrosine phosphorylation of a number of cellular substrates including the JAK family kinases TYK2 and JAK2. In turn, recruited STAT4 gets phosphorylated and translocates to the nucleus where it regulates cytokine/growth factor responsive genes. As part of IL-35, plays essential roles in maintaining the immune homeostasis of the liver microenvironment and also functions as an immune-suppressive cytokine. Mediates biological events through unconventional receptors composed of IL12RB2 and gp130/IL6ST heterodimers or homodimers. Signaling requires the transcription factors STAT1 and STAT4, which form a unique heterodimer that binds to distinct DNA sites. The sequence is that of Interleukin-12 subunit alpha (IL12A) from Equus caballus (Horse).